Reading from the N-terminus, the 129-residue chain is Large ribosomal subunit protein bL20 (129 aa).

The span at Met-1 to Val-17 shows a compositional bias: basic residues. The tract at residues Met-1 to Ser-29 is disordered.

The protein belongs to the bacterial ribosomal protein bL20 family.

Its function is as follows. Binds directly to 23S ribosomal RNA and is necessary for the in vitro assembly process of the 50S ribosomal subunit. It is not involved in the protein synthesizing functions of that subunit. The chain is Large ribosomal subunit protein bL20 from Mycobacterium ulcerans (strain Agy99).